Consider the following 302-residue polypeptide: Pyridoxal kinase (302 aa).

S10, T45, and Y122 together coordinate substrate. ATP-binding positions include 181–182 (TS) and 215–227 (VGPK…TGTG). Position 228 (D228) interacts with substrate.

It belongs to the pyridoxine kinase family. As to quaternary structure, homodimer. Requires a divalent metal cation as cofactor.

It is found in the cytoplasm. It carries out the reaction pyridoxal + ATP = pyridoxal 5'-phosphate + ADP + H(+). It functions in the pathway cofactor metabolism; pyridoxal 5'-phosphate salvage; pyridoxal 5'-phosphate from pyridoxal: step 1/1. In terms of biological role, required for synthesis of pyridoxal-5-phosphate from vitamin B6. The chain is Pyridoxal kinase (pykA) from Dictyostelium discoideum (Social amoeba).